The following is a 379-amino-acid chain: UDP-4-amino-4-deoxy-L-arabinose--oxoglutarate aminotransferase (379 aa).

Lys-182 carries the post-translational modification N6-(pyridoxal phosphate)lysine.

Belongs to the DegT/DnrJ/EryC1 family. ArnB subfamily. Homodimer. It depends on pyridoxal 5'-phosphate as a cofactor.

It carries out the reaction UDP-4-amino-4-deoxy-beta-L-arabinose + 2-oxoglutarate = UDP-beta-L-threo-pentopyranos-4-ulose + L-glutamate. Its pathway is nucleotide-sugar biosynthesis; UDP-4-deoxy-4-formamido-beta-L-arabinose biosynthesis; UDP-4-deoxy-4-formamido-beta-L-arabinose from UDP-alpha-D-glucuronate: step 2/3. It participates in bacterial outer membrane biogenesis; lipopolysaccharide biosynthesis. In terms of biological role, catalyzes the conversion of UDP-4-keto-arabinose (UDP-Ara4O) to UDP-4-amino-4-deoxy-L-arabinose (UDP-L-Ara4N). The modified arabinose is attached to lipid A and is required for resistance to polymyxin and cationic antimicrobial peptides. The protein is UDP-4-amino-4-deoxy-L-arabinose--oxoglutarate aminotransferase of Klebsiella pneumoniae subsp. pneumoniae (strain ATCC 700721 / MGH 78578).